The primary structure comprises 55 residues: Neurotoxin B-IV (55 aa).

P10 carries the post-translational modification Hydroxyproline. 4 cysteine pairs are disulfide-bonded: C12–C52, C16–C48, C23–C41, and C26–C37.

This sequence belongs to the worm B-toxin family.

The protein localises to the secreted. In terms of biological role, this toxin increases the excitability of nerves by delaying the inactivation of the voltage-gated sodium channel (Nav). Only acts on some crustacean. Is more abundant, but 15-fold less toxic than neurotoxin B-II. This chain is Neurotoxin B-IV, found in Cerebratulus lacteus (Milky ribbon worm).